The sequence spans 427 residues: Trigger factor (427 aa).

Residues 160–240 enclose the PPIase FKBP-type domain; sequence TDTVIGDVVK…VKEVKRLELP (81 aa).

The protein belongs to the FKBP-type PPIase family. Tig subfamily.

The protein localises to the cytoplasm. The enzyme catalyses [protein]-peptidylproline (omega=180) = [protein]-peptidylproline (omega=0). Functionally, involved in protein export. Acts as a chaperone by maintaining the newly synthesized protein in an open conformation. Functions as a peptidyl-prolyl cis-trans isomerase. In Chlorobium limicola (strain DSM 245 / NBRC 103803 / 6330), this protein is Trigger factor.